A 709-amino-acid polypeptide reads, in one-letter code: Copper amine oxidase vicK1 (709 aa).

Positions 1–20 are cleaved as a signal peptide; the sequence is MKLFLLFTLTLVNIFSVSLQ. The active-site Proton acceptor is the Asp-365. The cysteines at positions 383 and 408 are disulfide-linked. Residue Tyr-448 is the Schiff-base intermediate with substrate; via topaquinone of the active site. A 2',4',5'-topaquinone modification is found at Tyr-448. Residues His-496 and His-498 each contribute to the Cu cation site. Ca(2+) contacts are provided by Asp-505, Leu-506, Asp-507, Glu-548, Phe-641, Glu-645, Asp-651, and Leu-652. His-662 provides a ligand contact to Cu cation.

It belongs to the copper/topaquinone oxidase family. In terms of assembly, homodimer; disulfide-linked. Requires Cu cation as cofactor. Ca(2+) serves as cofactor. The cofactor is L-topaquinone. In terms of processing, topaquinone (TPQ) is generated by copper-dependent autoxidation of a specific tyrosyl residue.

Its pathway is mycotoxin biosynthesis. Copper amine oxidase, part of the gene cluster that mediates the biosynthesis of the secondary metabolite victorin, the molecular basis for Victoria blight of oats. Within the pathway, vicK1 catalyzes the oxidative deamination of the N-terminal glycyl moiety of the hexapeptides in order to produce the active glyoxylate form victorins. The pathway starts with the processing of the precursor vicA1 by several endopeptidases including kexin proteases as well as the cluster-specific S28 family peptidases vicPa and vicPb to produce 7 identical copies of the hexapeptide Gly-Leu-Lys-Leu-Ala-Phe. After being excised from the precursor peptide, the core peptides are cyclized and modified post-translationally by enzymes encoded within the gene cluster. The ustYa family oxidase vicYb is required for the formation of the macrocycle in victorin and the copper amine oxidases (CAOs) vicK1 and vicK2 are responsible for converting victorin to the active form by oxidizing the N-terminal glycyl residue in the peptides to glyoxylate. Relaxed substrate specificity of enzymes in the victorin biosynthetic pathway results in a metabolic grid that produces a set of analogs including victorinines B, C, E or HV-toxin M. The sequence is that of Copper amine oxidase vicK1 from Bipolaris victoriae (strain FI3) (Victoria blight of oats agent).